We begin with the raw amino-acid sequence, 300 residues long: Neutral protease NprE (300 aa).

Aspartate 139 provides a ligand contact to Ca(2+). Histidine 143 serves as a coordination point for Zn(2+). Glutamate 144 is a catalytic residue. Zn(2+) contacts are provided by histidine 147 and glutamate 167. Positions 178, 181, 183, and 186 each coordinate Ca(2+). Catalysis depends on histidine 228, which acts as the Proton donor.

Belongs to the peptidase M4 family. Requires Ca(2+) as cofactor. The cofactor is Zn(2+).

Its subcellular location is the secreted. It catalyses the reaction Similar, but not identical, to that of thermolysin.. Extracellular zinc metalloprotease. The polypeptide is Neutral protease NprE (nprE) (Bacillus pumilus (Bacillus mesentericus)).